The following is a 555-amino-acid chain: Wee1-like protein kinase 2-A (555 aa).

Disordered stretches follow at residues 1-81 and 149-175; these read MRTA…SVGA and FTPE…DCRT. Residues 38 to 48 show a composition bias toward polar residues; the sequence is SPVSSWRTNNC. A compositionally biased stretch (low complexity) spans 68–78; the sequence is SPSSDYSPDPS. Residues 149-160 show a composition bias toward polar residues; the sequence is FTPESYRQTHFQ. Positions 210–480 constitute a Protein kinase domain; that stretch reads FLEIEKIGAG…AASLAKNSVL (271 aa). ATP contacts are provided by residues 216–224 and lysine 239; that span reads IGAGEFGSV. Aspartate 337 serves as the catalytic Proton acceptor. Mg(2+) contacts are provided by asparagine 342 and aspartate 374. Positions 487–513 form a coiled coil; the sequence is AAQLQKQLNVEKFKTAMLERELKAAKL. Phosphoserine is present on serine 549.

The protein belongs to the protein kinase superfamily. Ser/Thr protein kinase family. WEE1 subfamily. Interacts with prmt5; this promotes protesomal degradation of wee2-a in the nucleus. The interaction with prmt5 is disrupted upon activation of the DNA replication checkpoint. Subject to proteasomal degradation in the nucleus. As to expression, detected in egg (at protein level). Oocyte-specific maternally supplied protein. Present in immature and mature oocytes and in early (pregastrula) embryos, but not in post-gastrula embryos.

Its subcellular location is the nucleus. The protein resides in the cytoplasm. It is found in the cytosol. It carries out the reaction L-tyrosyl-[protein] + ATP = O-phospho-L-tyrosyl-[protein] + ADP + H(+). Its function is as follows. Oocyte-specific protein tyrosine kinase that phosphorylates and inhibits cdk1 and acts as a key regulator of meiosis. Required to maintain meiotic arrest in oocytes by phosphorylating cdk1 at 'Tyr-15', which inhibits cdk1 activity and prevents meiotic reentry. Negative regulator of mitosis. Involved in the mitotic DNA replication checkpoint. The sequence is that of Wee1-like protein kinase 2-A (wee2-a) from Xenopus laevis (African clawed frog).